A 208-amino-acid polypeptide reads, in one-letter code: Large ribosomal subunit protein uL3 (208 aa).

Residues 130 to 168 (GGSKTHGQSDRLRAPGSVGGSSFPSRTFKGQRMAGRKGS) form a disordered region.

The protein belongs to the universal ribosomal protein uL3 family. In terms of assembly, part of the 50S ribosomal subunit. Forms a cluster with proteins L14 and L19.

Its function is as follows. One of the primary rRNA binding proteins, it binds directly near the 3'-end of the 23S rRNA, where it nucleates assembly of the 50S subunit. The polypeptide is Large ribosomal subunit protein uL3 (Chloroherpeton thalassium (strain ATCC 35110 / GB-78)).